The following is a 550-amino-acid chain: Crystal protein (550 aa).

The N-terminal stretch at 1-19 (MNKIIILLIILLSFDIISA) is a signal peptide. Cysteines 91 and 111 form a disulfide. Asparagine 156 is a glycosylation site (N-linked (GlcNAc...) asparagine). The active-site Acyl-ester intermediate is the serine 215. A disulfide bridge connects residues cysteine 267 and cysteine 274. Residues glutamate 340 and histidine 443 each act as charge relay system in the active site. An N-linked (GlcNAc...) asparagine glycan is attached at asparagine 506.

This sequence belongs to the type-B carboxylesterase/lipase family.

It localises to the cytoplasmic vesicle. The protein resides in the esterosome membrane. The chain is Crystal protein (cryS) from Dictyostelium discoideum (Social amoeba).